Reading from the N-terminus, the 2084-residue chain is MAYFLPSFFQKRLLRYALSRLELVDTEALDLDSLGIRWGQRSTVELRDIGLRLETRRAETHDATTDQKTSGRVDPGSGDEPILPNPTDLAESFLQAEPKEEKEELQAAISSQSQVLQHTSTSSSDDEEELGLGNETVSLPSFVAAFLKGVVDRLQVQVDDISIRVDVETKQEGSSKRHPEEKPDLITGLLSVRQVSMGAVSTHSESGEASSSERRRLVSLSDINLALISEPVVFSNYSRFAAPASPSTPVQPKSSRPPSRAQSPSPETSSESSLALAMTRSTIFEPPQDLTRQELEEQHTPRLEGSVYTYDGRFSDADTEDGKRSYGSLEDSRQFEDDEKLLDNPAYLDSVIDYQFQDDDPERLDDMQTRVDGLFRRSRDTPRSQSPEHTAELTDQNSHPEGALIPLNDRHELEVARLPSHQHFLEAPEAITEPGSSGLTPEKDFRPGYKQQLPLVCAPSSEPDSSGSASESFKESELSESRLFSNEEAQSMYMSAISQGSTSHSFMPNIPGAWDSPESTYVRDTGFHETPTAMEQDAYSEQDETITTPKLTAQEGIYLSHASSIDNLQKTTTGTTGRESIQTSPGFNRLTDVAKRFVSVDKVLIWIPSVNHEKVPGDSQSASHQEMSSDGLKDSTAYLQDSVIDDDLLASRIHGFPGPRSGANDPSSPHEGVDHKASGYQEKTKHDAGFSSERDEATVEIHSAEVQFDIAIGWLVIKIGKRIVNAFGHGDGEPPKKHNSESKAPEQVQPKESFGLILNKFSIKFVEHVPGHANPFGESRQYSPTFFGLMHEDIVLQTTASGLKAHFSSTNDQTKLRLDITKFTLGVASEDLISFNQDLKMRESMRDVLSPMHGDISLSMSKSLESARIHVTTLPLHLNLNIQRLEEVVGWIGGLSTILELGSSISSASGAKTPKKDPPKRPRGVHFEAPPSPEKLPQDTSLPWKVNARIGGVALNIVGESHYLKLRTTAVKVVSRFEGVGVQIDKAKLSGPLPLDDSKDAPAKINLSNIRIEYLFAPKEVDLDRLLSLITPSKDKYDEDDDIMLDTLFRQRRQGSVLRTTIAGADIMISRITDFDSLPQLGDELSRLSNVAKYLPEDDRPGLLTLNLIRDFEARVNVGGKVGDITARLKNAEVAYISIPSLVAAQVGSATVLRNGTEELLGEALPLSAEQRSGQIPHPMLMARFIADEMEPTIKVKMHNLRAEYTVPAAIAFLGLNESSTTSDFAANMAQSIGNLAELQPSKESQSAIKPGSPKSPVRPTILALALRDCVIGLNPRGSEAKGLVVLTNANFSGAMDDGASSEATLDLRKASIMIIDDVRNMGSTDDSHRRNSTAPPTNQVQSFIDMGFVTVSSISSATASVKLLRSGEDGTQSLDVELRDDLLILETCADSTQTLISIVNGLQPPTPPSVTKKYRTEVLPLQDMLASFSGDAFALNSSSSLEGVSETAGDSAENIQDKEGHIEDEVEYVSDFYPAKPTSGGGSLHEAMTASGSNELLDSFHSQYYVSSSISDLEFRDDHFATQSAVGGTAHRWDSTENTYGLSDDTKLQKSPLRIRVRDAHVIWNLFDGYDWQRTRDTISKAVKDVERKATDRRARANRASPSFDEDEESVIGDCLFNSIYIGIPANKDPRELRSDINRNIDDLVSETGSYATTTTVTGATVRQSQSPSFRKKLRLSRSKYHKMTFELKGICADLVVFPPDSGETQSSLDVRVNDLEIFDHVPTSTWKKFATYMHEVGEKESGTSMVHLEILTVRPVPELAASEIVLKATLLPLRLHVDQDALDFLCRFFEFRDDSAPASSAPQDIPFLQRVEINAVPVKLDFKPKRVDYTGLRSGRTTEFMNFFVLDGADMVMRHVIIYGVSGFDKLGQTLNDIWMPDIKRNQLPGVLAGLAPIRSLVNVGGGVKDLVVVPMREYRKDGRIVRSIQKGALAFAKTTSNELVKLGAKLAIGTQTVLQGAEDLLTSPNTQLAGAEEELGDEEEAKKISLYADQPVGVVQGLRGAFRGLERDLLLTRDAIVAVPGEVVESGSAKAAAKAVWKRAPTVILRPAIGVSKAVGQTLLGAGNTLDPSNRRKMEDKYKRH.

The segment covering 57 to 71 (RAETHDATTDQKTSG) has biased composition (basic and acidic residues). Disordered stretches follow at residues 57–87 (RAET…PNPT), 100–131 (EEKE…EELG), 242–334 (APAS…DSRQ), 372–404 (DGLF…EGAL), 425–482 (LEAP…SESR), 613–633 (EKVP…DGLK), 653–693 (IHGF…FSSE), 728–749 (GHGD…EQVQ), 907–940 (SASG…PQDT), and 2065–2084 (AGNT…YKRH). Over residues 108–118 (AISSQSQVLQH) the composition is skewed to polar residues. A compositionally biased stretch (low complexity) spans 251–279 (QPKSSRPPSRAQSPSPETSSESSLALAMT). 3 stretches are compositionally biased toward basic and acidic residues: residues 291–302 (TRQELEEQHTPR), 313–334 (RFSD…DSRQ), and 372–382 (DGLFRRSRDTP). Over residues 383–399 (RSQSPEHTAELTDQNSH) the composition is skewed to polar residues. Low complexity predominate over residues 458–471 (APSSEPDSSGSASE). The span at 618 to 628 (DSQSASHQEMS) shows a compositional bias: polar residues. Basic and acidic residues-rich tracts occupy residues 671–693 (EGVD…FSSE) and 730–744 (GDGE…ESKA). The segment covering 2072 to 2084 (SNRRKMEDKYKRH) has biased composition (basic and acidic residues).

This sequence belongs to the ATG2 family.

The protein localises to the preautophagosomal structure membrane. It localises to the endoplasmic reticulum membrane. The enzyme catalyses a 1,2-diacyl-sn-glycero-3-phosphocholine(in) = a 1,2-diacyl-sn-glycero-3-phosphocholine(out). It carries out the reaction a 1,2-diacyl-sn-glycero-3-phospho-L-serine(in) = a 1,2-diacyl-sn-glycero-3-phospho-L-serine(out). The catalysed reaction is a 1,2-diacyl-sn-glycero-3-phosphoethanolamine(in) = a 1,2-diacyl-sn-glycero-3-phosphoethanolamine(out). Lipid transfer protein required for autophagosome completion and peroxisome degradation. Tethers the edge of the isolation membrane (IM) to the endoplasmic reticulum (ER) and mediates direct lipid transfer from ER to IM for IM expansion. Atg2 binds to the ER exit site (ERES), which is the membrane source for autophagosome formation, using basic residues in its N-terminal region (NR) and to the expanding edge of the IM through its C-terminal region. The latter binding is assisted by an atg18-PtdIns3P interaction. Atg2 then extracts phospholipids from the membrane source using its NR and transfers them to atg9 to the IM through its predicted beta-sheet-rich structure for membrane expansion. In Aspergillus oryzae (strain ATCC 42149 / RIB 40) (Yellow koji mold), this protein is Autophagy-related protein 2 (atg2).